A 364-amino-acid polypeptide reads, in one-letter code: D-alanine--D-alanine ligase (364 aa).

The ATP-grasp domain maps to 146-352 (KLCAMNAGIA…FAELVEKLLL (207 aa)). Position 179 to 234 (179 to 234 (TKRFDWPLFVKPASLGSSVGISKVRNAEELAAALENACGLDSKALVEAAISGREIE)) interacts with ATP. Mg(2+) contacts are provided by Asp-305, Glu-319, and Asn-321.

This sequence belongs to the D-alanine--D-alanine ligase family. It depends on Mg(2+) as a cofactor. The cofactor is Mn(2+).

It localises to the cytoplasm. The enzyme catalyses 2 D-alanine + ATP = D-alanyl-D-alanine + ADP + phosphate + H(+). The protein operates within cell wall biogenesis; peptidoglycan biosynthesis. In terms of biological role, cell wall formation. This is D-alanine--D-alanine ligase from Chlorobaculum tepidum (strain ATCC 49652 / DSM 12025 / NBRC 103806 / TLS) (Chlorobium tepidum).